We begin with the raw amino-acid sequence, 219 residues long: Deoxyribose-phosphate aldolase (219 aa).

Catalysis depends on Asp88, which acts as the Proton donor/acceptor. The active-site Schiff-base intermediate with acetaldehyde is Lys150. Catalysis depends on Lys179, which acts as the Proton donor/acceptor.

Belongs to the DeoC/FbaB aldolase family. DeoC type 1 subfamily.

It localises to the cytoplasm. The catalysed reaction is 2-deoxy-D-ribose 5-phosphate = D-glyceraldehyde 3-phosphate + acetaldehyde. It participates in carbohydrate degradation; 2-deoxy-D-ribose 1-phosphate degradation; D-glyceraldehyde 3-phosphate and acetaldehyde from 2-deoxy-alpha-D-ribose 1-phosphate: step 2/2. Catalyzes a reversible aldol reaction between acetaldehyde and D-glyceraldehyde 3-phosphate to generate 2-deoxy-D-ribose 5-phosphate. This Aquifex aeolicus (strain VF5) protein is Deoxyribose-phosphate aldolase.